We begin with the raw amino-acid sequence, 101 residues long: NAD(P)H-quinone oxidoreductase subunit 4L, chloroplastic (101 aa).

3 helical membrane passes run methionine 2–isoleucine 22, methionine 32–phenylalanine 52, and isoleucine 61–valine 81.

This sequence belongs to the complex I subunit 4L family. NDH is composed of at least 16 different subunits, 5 of which are encoded in the nucleus.

Its subcellular location is the plastid. The protein localises to the chloroplast thylakoid membrane. It catalyses the reaction a plastoquinone + NADH + (n+1) H(+)(in) = a plastoquinol + NAD(+) + n H(+)(out). The enzyme catalyses a plastoquinone + NADPH + (n+1) H(+)(in) = a plastoquinol + NADP(+) + n H(+)(out). NDH shuttles electrons from NAD(P)H:plastoquinone, via FMN and iron-sulfur (Fe-S) centers, to quinones in the photosynthetic chain and possibly in a chloroplast respiratory chain. The immediate electron acceptor for the enzyme in this species is believed to be plastoquinone. Couples the redox reaction to proton translocation, and thus conserves the redox energy in a proton gradient. This is NAD(P)H-quinone oxidoreductase subunit 4L, chloroplastic from Gossypium barbadense (Sea Island cotton).